We begin with the raw amino-acid sequence, 352 residues long: GTPase Obg (352 aa).

Residues 1-159 (MSFIDEAKVF…FPIFMQLKVL (159 aa)) enclose the Obg domain. One can recognise an OBG-type G domain in the interval 160-327 (SDIGIIGMPN…VMLYEMLQKD (168 aa)). GTP contacts are provided by residues 166–173 (GMPNAGKS), 191–195 (FTTLE), 212–215 (DIPG), 279–282 (NKCD), and 308–310 (SLD). Mg(2+) is bound by residues serine 173 and threonine 193.

The protein belongs to the TRAFAC class OBG-HflX-like GTPase superfamily. OBG GTPase family. Monomer. It depends on Mg(2+) as a cofactor.

The protein localises to the cytoplasm. In terms of biological role, an essential GTPase which binds GTP, GDP and possibly (p)ppGpp with moderate affinity, with high nucleotide exchange rates and a fairly low GTP hydrolysis rate. Plays a role in control of the cell cycle, stress response, ribosome biogenesis and in those bacteria that undergo differentiation, in morphogenesis control. This Anaplasma phagocytophilum (strain HZ) protein is GTPase Obg.